The following is a 668-amino-acid chain: DNA ligase (668 aa).

Residues 37 to 41 (DAVYD), 86 to 87 (SM), and glutamate 116 contribute to the NAD(+) site. Lysine 118 acts as the N6-AMP-lysine intermediate in catalysis. 4 residues coordinate NAD(+): arginine 139, glutamate 173, lysine 288, and lysine 312. The Zn(2+) site is built by cysteine 406, cysteine 409, cysteine 424, and cysteine 429. The BRCT domain occupies 590–668 (APDNFFKEKT…EQEAIAKIEK (79 aa)).

It belongs to the NAD-dependent DNA ligase family. LigA subfamily. Requires Mg(2+) as cofactor. The cofactor is Mn(2+).

The catalysed reaction is NAD(+) + (deoxyribonucleotide)n-3'-hydroxyl + 5'-phospho-(deoxyribonucleotide)m = (deoxyribonucleotide)n+m + AMP + beta-nicotinamide D-nucleotide.. In terms of biological role, DNA ligase that catalyzes the formation of phosphodiester linkages between 5'-phosphoryl and 3'-hydroxyl groups in double-stranded DNA using NAD as a coenzyme and as the energy source for the reaction. It is essential for DNA replication and repair of damaged DNA. The polypeptide is DNA ligase (Lactobacillus johnsonii (strain CNCM I-12250 / La1 / NCC 533)).